A 669-amino-acid chain; its full sequence is DNA ligase (669 aa).

NAD(+) is bound by residues 33 to 37 (DAEYD), 82 to 83 (SL), and glutamate 114. Lysine 116 serves as the catalytic N6-AMP-lysine intermediate. NAD(+) contacts are provided by arginine 137, glutamate 174, lysine 291, and lysine 315. Residues cysteine 409, cysteine 412, cysteine 427, and cysteine 433 each contribute to the Zn(2+) site. A BRCT domain is found at 593–669 (EIPQPLAGKV…QTEQDLLALL (77 aa)).

The protein belongs to the NAD-dependent DNA ligase family. LigA subfamily. Requires Mg(2+) as cofactor. The cofactor is Mn(2+).

It carries out the reaction NAD(+) + (deoxyribonucleotide)n-3'-hydroxyl + 5'-phospho-(deoxyribonucleotide)m = (deoxyribonucleotide)n+m + AMP + beta-nicotinamide D-nucleotide.. Its function is as follows. DNA ligase that catalyzes the formation of phosphodiester linkages between 5'-phosphoryl and 3'-hydroxyl groups in double-stranded DNA using NAD as a coenzyme and as the energy source for the reaction. It is essential for DNA replication and repair of damaged DNA. This is DNA ligase from Vibrio vulnificus (strain YJ016).